A 317-amino-acid polypeptide reads, in one-letter code: Melanocyte-stimulating hormone receptor (317 aa).

Residues 1-28 form a disordered region; the sequence is MPMQGAQGRLRGSLNATPPTTPHSGLAG. Topologically, residues 1–37 are extracellular; that stretch reads MPMQGAQGRLRGSLNATPPTTPHSGLAGNQTGPWCLE. Asn-29 carries N-linked (GlcNAc...) asparagine glycosylation. A helical transmembrane segment spans residues 38–63; that stretch reads VSIPDELFLSLGLVSLVENMLVVAAI. The Cytoplasmic segment spans residues 64 to 72; it reads AKNRNLHSP. The helical transmembrane segment at 73–93 threads the bilayer; the sequence is MYYFICCLAVSDLLVSVSNVL. The Extracellular segment spans residues 94–118; that stretch reads ETAVMLLLEAGVLAAWAGVVQQLDN. A helical membrane pass occupies residues 119-140; sequence AIDVFICGSMVSSLCFLGAIAV. Residues 141–163 lie on the Cytoplasmic side of the membrane; it reads DRYITIFYALRYHSIVTLPRARW. Residues 164–183 form a helical membrane-spanning segment; it reads AIATIWAASVVCSTLFIAYY. Over 184 to 191 the chain is Extracellular; the sequence is DCTAVLLC. A helical membrane pass occupies residues 192–211; it reads LVSFFLALVVLMAVLYMHML. Over 212-240 the chain is Cytoplasmic; sequence ARACLHARSIARLHKRWRPVHQGLGLKGA. The chain crosses the membrane as a helical span at residues 241–266; the sequence is ATLSILLGSFFLCWGPFFLHLTLIVL. At 267–279 the chain is on the extracellular side; that stretch reads CPQHPTCSCVFKN. A helical membrane pass occupies residues 280–300; it reads FKLFLTLIICNSIVDPLIYAF. The Cytoplasmic segment spans residues 301–317; that stretch reads RSQELRKTLKEVLLCSW. The S-palmitoyl cysteine moiety is linked to residue Cys-315.

This sequence belongs to the G-protein coupled receptor 1 family. In terms of assembly, interacts with MGRN1, but does not undergo MGRN1-mediated ubiquitination; this interaction competes with GNAS-binding and thus inhibits agonist-induced cAMP production. Interacts with OPN3; the interaction results in a decrease in MC1R-mediated cAMP signaling and ultimately a decrease in melanin production in melanocytes.

The protein resides in the cell membrane. Its function is as follows. Receptor for MSH (alpha, beta and gamma) and ACTH. The activity of this receptor is mediated by G proteins which activate adenylate cyclase. Mediates melanogenesis, the production of eumelanin (black/brown) and phaeomelanin (red/yellow), via regulation of cAMP signaling in melanocytes. In Mammuthus primigenius (Siberian woolly mammoth), this protein is Melanocyte-stimulating hormone receptor (MC1R).